The primary structure comprises 122 residues: uncharacterized protein (122 aa).

A Phosphothreonine modification is found at threonine 55. Phosphoserine is present on residues serine 72, serine 86, serine 96, serine 112, and serine 118.

The protein resides in the cytoplasm. This is an uncharacterized protein from Homo sapiens (Human).